Reading from the N-terminus, the 94-residue chain is Integration host factor subunit beta (94 aa).

This sequence belongs to the bacterial histone-like protein family. In terms of assembly, heterodimer of an alpha and a beta chain.

This protein is one of the two subunits of integration host factor, a specific DNA-binding protein that functions in genetic recombination as well as in transcriptional and translational control. This chain is Integration host factor subunit beta (ihfB), found in Dickeya dadantii (strain 3937) (Erwinia chrysanthemi (strain 3937)).